A 189-amino-acid chain; its full sequence is Large ribosomal subunit protein eL18 (189 aa).

It belongs to the eukaryotic ribosomal protein eL18 family.

It localises to the cytoplasm. The sequence is that of Large ribosomal subunit protein eL18 (RpL18) from Aedes aegypti (Yellowfever mosquito).